The sequence spans 163 residues: 2-C-methyl-D-erythritol 2,4-cyclodiphosphate synthase (163 aa).

A divalent metal cation is bound by residues Asp11 and His13. Residues 11–13 (DIH) and 37–38 (HS) each bind 4-CDP-2-C-methyl-D-erythritol 2-phosphate. His45 lines the a divalent metal cation pocket. 4-CDP-2-C-methyl-D-erythritol 2-phosphate is bound by residues 59 to 61 (DIG), 64 to 68 (FSDTD), 103 to 109 (AQVPKMA), and Arg145.

This sequence belongs to the IspF family. In terms of assembly, homotrimer. The cofactor is a divalent metal cation.

It catalyses the reaction 4-CDP-2-C-methyl-D-erythritol 2-phosphate = 2-C-methyl-D-erythritol 2,4-cyclic diphosphate + CMP. Its pathway is isoprenoid biosynthesis; isopentenyl diphosphate biosynthesis via DXP pathway; isopentenyl diphosphate from 1-deoxy-D-xylulose 5-phosphate: step 4/6. In terms of biological role, involved in the biosynthesis of isopentenyl diphosphate (IPP) and dimethylallyl diphosphate (DMAPP), two major building blocks of isoprenoid compounds. Catalyzes the conversion of 4-diphosphocytidyl-2-C-methyl-D-erythritol 2-phosphate (CDP-ME2P) to 2-C-methyl-D-erythritol 2,4-cyclodiphosphate (ME-CPP) with a corresponding release of cytidine 5-monophosphate (CMP). This Nitrosomonas europaea (strain ATCC 19718 / CIP 103999 / KCTC 2705 / NBRC 14298) protein is 2-C-methyl-D-erythritol 2,4-cyclodiphosphate synthase.